Here is a 295-residue protein sequence, read N- to C-terminus: HTH-type transcriptional regulator TrpI (295 aa).

Positions 6 to 63 (PSLNALRAFEAAARLHSISLAAEELHVTHGAVSRQVRLLEDDLGVALFGKDGRGVKLT) constitute an HTH lysR-type domain. Residues 23–42 (ISLAAEELHVTHGAVSRQVR) constitute a DNA-binding region (H-T-H motif).

Belongs to the LysR transcriptional regulatory family. Homotetramer.

In terms of biological role, activates the expression of the trpBA genes, which encode the two tryptophan synthase subunits, and represses initiation at its own promoter. Acts by binding to two adjacent sites in the intergenic region. In the absence of the inducer indoleglycerol phosphate (InGP), TrpI binds to site I. In the presence of InGP, TrpI binds to site I and site II. Binding to site II is site I dependent. InGP strongly stimulates binding to site II and is required for maximal activation of trpBA. In Pseudomonas aeruginosa (strain ATCC 15692 / DSM 22644 / CIP 104116 / JCM 14847 / LMG 12228 / 1C / PRS 101 / PAO1), this protein is HTH-type transcriptional regulator TrpI.